Reading from the N-terminus, the 340-residue chain is Uroporphyrinogen decarboxylase (340 aa).

Substrate is bound by residues 21-25 (RQAGR), D71, Y148, S203, and H316.

This sequence belongs to the uroporphyrinogen decarboxylase family. In terms of assembly, homodimer.

Its subcellular location is the cytoplasm. It carries out the reaction uroporphyrinogen III + 4 H(+) = coproporphyrinogen III + 4 CO2. It functions in the pathway porphyrin-containing compound metabolism; protoporphyrin-IX biosynthesis; coproporphyrinogen-III from 5-aminolevulinate: step 4/4. Its function is as follows. Catalyzes the decarboxylation of four acetate groups of uroporphyrinogen-III to yield coproporphyrinogen-III. The polypeptide is Uroporphyrinogen decarboxylase (Campylobacter hominis (strain ATCC BAA-381 / DSM 21671 / CCUG 45161 / LMG 19568 / NCTC 13146 / CH001A)).